The chain runs to 226 residues: N-acetyltransferase family 8 member 2 (226 aa).

2 consecutive transmembrane segments (helical) span residues 33–55 and 60–82; these read FYHVLTLPHSLLLFPGVPVTIIL and WLLATVYSFLFLLCLRLIFWVSC. In terms of domain architecture, N-acetyltransferase spans 69–221; it reads LFLLCLRLIF…FHFTYSLPSV (153 aa). At Lys-204 the chain carries N6-acetyllysine.

It belongs to the camello family.

The protein localises to the membrane. In terms of biological role, probable acetyltransferase. Has no detectable histone acetyltransferase activity towards histone H3 or H4. This Rattus norvegicus (Rat) protein is N-acetyltransferase family 8 member 2.